A 643-amino-acid chain; its full sequence is Manganese lipoxygenase (643 aa).

Positions 166–643 (WYTDEVFAQQ…PEQLANAIVI (478 aa)) constitute a Lipoxygenase domain. Mn(2+)-binding residues include H325, H330, H510, N514, and I643.

The protein belongs to the lipoxygenase family. Requires Mn(2+) as cofactor.

The catalysed reaction is (9Z,12Z)-octadecadienoate + O2 = (13S)-hydroperoxy-(9Z,11E)-octadecadienoate. In terms of biological role, lipoxygenase that metabolizes linoleic and alpha-linolenic acids to 13S-hydroperoxy fatty acids. The sequence is that of Manganese lipoxygenase from Pleurotus sapidus (Oyster mushroom).